The chain runs to 309 residues: Mitochondrial import receptor subunit TOM34 (309 aa).

Residue Ser-8 is modified to Phosphoserine. TPR repeat units follow at residues 9 to 42, 51 to 84, and 86 to 118; these read VEELRAAGNESFRNGQYAEASALYGRALRVLQAQ, SVLYSNRAACHLKDGNCRDCIKDCTSALALVPFS, and KPLLRRASAYEALEKYPMAYVDYKTVLQIDDNV. Ser-160 carries the phosphoserine modification. The disordered stretch occupies residues 161–189; the sequence is LPSENHKEMAKSKSKETTATKNRVPSAGD. The span at 164–178 shows a compositional bias: basic and acidic residues; it reads ENHKEMAKSKSKETT. Ser-186 is subject to Phosphoserine. TPR repeat units lie at residues 193–226, 227–260, and 262–294; these read ARVLKEEGNELVKKGNHKKAIEKYSESLLCSNLE, SATYSNRALCYLVLKQYTEAVKDCTEALKLDGKN, and KAFYRRAQAHKALKDYKSSFADISNLLQIEPRN. A Glycyl lysine isopeptide (Lys-Gly) (interchain with G-Cter in SUMO2) cross-link involves residue Lys-197.

Belongs to the Tom34 family. As to quaternary structure, interacts with HSP90A, VCP, ATP6V1D, KIAA0665, AMPK, and DMAP1 through its TPR repeat. Ubiquitous.

It is found in the cytoplasm. The protein localises to the mitochondrion outer membrane. Its function is as follows. Plays a role in the import of cytosolically synthesized preproteins into mitochondria. Binds the mature portion of precursor proteins. Interacts with cellular components, and possesses weak ATPase activity. May be a chaperone-like protein that helps to keep newly synthesized precursors in an unfolded import compatible state. This is Mitochondrial import receptor subunit TOM34 (TOMM34) from Homo sapiens (Human).